The sequence spans 161 residues: MANGNGTGAEVDAAPAINAMVQYTKDFSFENPNAPRSLGPQDKPPNIQIQVNVNAKQVAENDFEVNILLEGSAKTDADTLFKFELDYAGLFRLINIPQSDAHPVIMIECPRLLFPFARQIIADAVRSGGFPPLYIDPIDFAALYRQRMSQVAANEQAPTVA.

The protein belongs to the SecB family. Homotetramer, a dimer of dimers. One homotetramer interacts with 1 SecA dimer.

The protein resides in the cytoplasm. One of the proteins required for the normal export of preproteins out of the cell cytoplasm. It is a molecular chaperone that binds to a subset of precursor proteins, maintaining them in a translocation-competent state. It also specifically binds to its receptor SecA. The sequence is that of Protein-export protein SecB from Methylocella silvestris (strain DSM 15510 / CIP 108128 / LMG 27833 / NCIMB 13906 / BL2).